Reading from the N-terminus, the 227-residue chain is UPF0758 protein lpg2489 (227 aa).

The MPN domain occupies 102–225 (RLSNTQQTYA…YSIFAENKWV (124 aa)). Zn(2+)-binding residues include His-173, His-175, and Asp-186. The JAMM motif motif lies at 173–186 (HNHPSGLSDASQQD).

This sequence belongs to the UPF0758 family.

The protein is UPF0758 protein lpg2489 of Legionella pneumophila subsp. pneumophila (strain Philadelphia 1 / ATCC 33152 / DSM 7513).